The chain runs to 314 residues: Testisin (314 aa).

The N-terminal stretch at 1–19 is a signal peptide; that stretch reads MGARGALLLALLLARAGLR. The propeptide occupies 20-41; it reads KPESQEAAPLSGPCGRRVITSR. Disulfide bonds link Cys-33-Cys-157 and Cys-67-Cys-83. Residues 42-286 enclose the Peptidase S1 domain; the sequence is IVGGEDAELG…HFEWIQKLMA (245 aa). Residues His-82 and Asp-137 each act as charge relay system in the active site. Asn-167 and Asn-200 each carry an N-linked (GlcNAc...) asparagine glycan. Disulfide bonds link Cys-171-Cys-244, Cys-204-Cys-223, and Cys-234-Cys-262. The Charge relay system role is filled by Ser-238. Asn-273 carries N-linked (GlcNAc...) asparagine glycosylation. Residue Ser-288 is the site of GPI-anchor amidated serine attachment. Positions 289-314 are cleaved as a propeptide — removed in mature form; that stretch reads GMSQPDPSWPLLFFPLLWALPLLGPV.

This sequence belongs to the peptidase S1 family. In terms of tissue distribution, expressed predominantly in premeiotic testicular germ cells, mostly late pachytene and diplotene spermatocytes.

The protein localises to the cell membrane. In terms of biological role, could regulate proteolytic events associated with testicular germ cell maturation. The sequence is that of Testisin (PRSS21) from Homo sapiens (Human).